Reading from the N-terminus, the 764-residue chain is Subtilisin-like protease SBT3.1 (764 aa).

Positions 1–32 are cleaved as a signal peptide; that stretch reads MIQTLKTDSSFRLCFAAIAFGFVFIMNGKLSS. Residues 33–120 constitute a propeptide, activation peptide; sequence GTTPHEFPVY…LLENRKLGLQ (88 aa). The 76-residue stretch at 41-116 folds into the Inhibitor I9 domain; that stretch reads VYIFYLGERK…EVIILLENRK (76 aa). Residue Asn-76 is glycosylated (N-linked (GlcNAc...) asparagine). Positions 124–610 constitute a Peptidase S8 domain; it reads TWDYLGQFST…GGLVNLEKAT (487 aa). Residue Asp-156 is the Charge relay system of the active site. Asn-216 carries an N-linked (GlcNAc...) asparagine glycan. The active-site Charge relay system is His-230. 2 N-linked (GlcNAc...) asparagine glycosylation sites follow: Asn-245 and Asn-374. Ser-541 acts as the Charge relay system in catalysis. N-linked (GlcNAc...) asparagine glycans are attached at residues Asn-674, Asn-711, and Asn-747.

The protein belongs to the peptidase S8 family.

It is found in the secreted. This chain is Subtilisin-like protease SBT3.1, found in Arabidopsis thaliana (Mouse-ear cress).